The primary structure comprises 552 residues: MTPADLADAIVAAIGRAVADGDLDVTVPTTVTVERPKTAGHGDYASPVALQLAKAARRKPREVAEVLAGRLATQSGIASVDIAGPGFLNFTLAGDALGEIARTVVRAGESYGHAAKPRGVRVNLEFVSANPTGPVTLASARWAAVGDALARILTAAGFSVGGEYYVNDAGVQIERFGASVLAAAAGREIPAEGYHGAYVAEIAAAVLAGRPDLLDLPEDAALAVTTEEGLALMLTEIRSTLEGFGVHFDRWASERALHTAGALTKAIDDLRAQGHVYDADGAVWLRTTDFGDDKDRPLVKSDGQPTYFCADAAYYRDKRGRGFDQLIYLLGADHHGYVARLKAISACFGDDPATNLDVIIGQLVTLSRGGAPVKMSKRAGTFLTLHDLVDAVGVDAARYSLVRSSLDSSLDLDLDLVTRQTSDNPVFYVQYAHARISSLLRNAEALGLPTASETADVALLTHPREVDLLRGLGEFPRVIEAAASLRGPHRVARYLEELAGVYHRFYDACRVLPQGDEEAGPLTGARLLLVAATRVVLANGLGLLGVSAPERM.

A 'HIGH' region motif is present at residues 129–139 (ANPTGPVTLAS).

Belongs to the class-I aminoacyl-tRNA synthetase family. In terms of assembly, monomer.

The protein resides in the cytoplasm. It catalyses the reaction tRNA(Arg) + L-arginine + ATP = L-arginyl-tRNA(Arg) + AMP + diphosphate. This Frankia alni (strain DSM 45986 / CECT 9034 / ACN14a) protein is Arginine--tRNA ligase.